The sequence spans 337 residues: N-acetyl-gamma-glutamyl-phosphate reductase (337 aa).

The active site involves cysteine 149.

It belongs to the NAGSA dehydrogenase family. Type 1 subfamily.

It is found in the cytoplasm. It catalyses the reaction N-acetyl-L-glutamate 5-semialdehyde + phosphate + NADP(+) = N-acetyl-L-glutamyl 5-phosphate + NADPH + H(+). The protein operates within amino-acid biosynthesis; L-arginine biosynthesis; N(2)-acetyl-L-ornithine from L-glutamate: step 3/4. Functionally, catalyzes the NADPH-dependent reduction of N-acetyl-5-glutamyl phosphate to yield N-acetyl-L-glutamate 5-semialdehyde. The chain is N-acetyl-gamma-glutamyl-phosphate reductase from Wolinella succinogenes (strain ATCC 29543 / DSM 1740 / CCUG 13145 / JCM 31913 / LMG 7466 / NCTC 11488 / FDC 602W) (Vibrio succinogenes).